We begin with the raw amino-acid sequence, 116 residues long: Large ribosomal subunit protein bL20c (116 aa).

The protein belongs to the bacterial ribosomal protein bL20 family.

It is found in the plastid. The protein localises to the chloroplast. Functionally, binds directly to 23S ribosomal RNA and is necessary for the in vitro assembly process of the 50S ribosomal subunit. It is not involved in the protein synthesizing functions of that subunit. This is Large ribosomal subunit protein bL20c from Oltmannsiellopsis viridis (Marine flagellate).